A 324-amino-acid polypeptide reads, in one-letter code: D-alanine--D-alanine ligase (324 aa).

The ATP-grasp domain maps to 121–321 (NQYLKAFGVR…IKDVMTDIIE (201 aa)). 149–204 (VEKIGLPCFIKPNLGGSSFGVTKVKTREQIQPAIAKAFSEAEEVMIEAFMGGTELT) is a binding site for ATP. Mg(2+)-binding residues include D275, E288, and N290.

It belongs to the D-alanine--D-alanine ligase family. Mg(2+) serves as cofactor. The cofactor is Mn(2+).

The protein localises to the cytoplasm. It catalyses the reaction 2 D-alanine + ATP = D-alanyl-D-alanine + ADP + phosphate + H(+). Its pathway is cell wall biogenesis; peptidoglycan biosynthesis. Its function is as follows. Cell wall formation. The protein is D-alanine--D-alanine ligase of Bacteroides fragilis (strain YCH46).